Here is a 2016-residue protein sequence, read N- to C-terminus: Cell adhesion molecule Dscam1 (2016 aa).

Positions 1–28 (MNMPNERLKWLMLFAAVALIACGSQTLA) are cleaved as a signal peptide. Residues 29 to 1618 (ANPPDADQKG…TIRIILSNLN (1590 aa)) are Extracellular-facing. 9 Ig-like C2-type domains span residues 39–134 (PVFL…VHVR), 138–230 (AQYY…TRLS), 247–338 (PKIN…TVLT), 342–421 (PLSA…AELK), 428–522 (PPVI…AKLN), 527–613 (PYIR…LEVQ), 618–712 (PQVL…LQVN), 715–807 (PRWI…IMIS), and 812–904 (PEFT…ASIN). Residue Asn53 is glycosylated (N-linked (GlcNAc...) asparagine). Cys61 and Cys117 are disulfide-bonded. Residues Asp144, Asn146, and Leu161 each contribute to the Zn(2+) site. Disulfide bonds link Cys160-Cys217, Cys160-Thr219, Cys160-Lys220, Cys269-Cys322, Pro270-Val323, Ala276-Gly329, Cys364-Cys405, Cys450-Cys506, Cys547-Cys596, Cys640-Cys694, Val641-Cys694, Val641-Ile695, and Cys736-Cys790. Asn325 carries N-linked (GlcNAc...) asparagine glycosylation. N-linked (GlcNAc...) asparagine glycosylation is found at Asn492 and Asn577. Asn820 carries an N-linked (GlcNAc...) asparagine glycan. A disulfide bridge connects residues Cys833 and Cys890. 4 Fibronectin type-III domains span residues 913-1007 (MPYA…TAEE), 1012-1116 (KPQN…TPSQ), 1117-1213 (PPSD…TEPD), and 1217-1310 (APTD…PSDQ). 3 N-linked (GlcNAc...) asparagine glycosylation sites follow: Asn1022, Asn1055, and Asn1186. The region spanning 1312 to 1394 (PAKIASFDDT…ENSIAKDSIT (83 aa)) is the Ig-like C2-type 10 domain. A disulfide bridge links Cys1334 with Cys1382. Fibronectin type-III domains follow at residues 1402 to 1495 (PPQS…TKGQ) and 1499 to 1594 (LPEK…TGGT). The chain crosses the membrane as a helical span at residues 1619–1639 (LVVPVVAALLVIIIAIIVICI). Topologically, residues 1640–2016 (LRSKGNHHKD…GFTAYDTMAV (377 aa)) are cytoplasmic. The PXXP motif 1; SH3-binding signature appears at 1685–1688 (PPVP). Positions 1688 to 1719 (PGSNYNTCDRIKRGRGGLRSNHSTWDPRRNPN) are disordered. A PXXP motif 2; SH3-binding motif is present at residues 1727-1730 (PPVP). Disordered regions lie at residues 1787–1846 (GHAG…DDPA) and 1862–2016 (SQGG…TMAV). Over residues 1826-1836 (KNSQGGQSSIY) the composition is skewed to polar residues. The short motif at 1842–1845 (YDDP) is the YXXP motif 1; potential SH2-binding element. The short motif at 1875 to 1878 (YDDP) is the YXXP motif 2; potential SH2-binding element. Over residues 1897-1918 (GQPYDHYGSRGSMGRRSIGSAR) the composition is skewed to low complexity. The Polyproline tract (probable SH3-binding) motif lies at 1925-1932 (PEPPPPPP). Composition is skewed to basic and acidic residues over residues 1944-1962 (DSKE…DHGP) and 1974-1993 (QPKD…RNET). The segment covering 1994–2004 (GPKQLQLQQAN) has biased composition (polar residues).

Homodimer (via extracellular region); alternative splicing produces a potential 19,008 different ectodomains and the majority of these show strong isoform-specific homodimerization. Interacts (via cytoplasmic domain) with dock/dreadlocks (via SH2 and SH3 domains); the interaction is direct and may require Dscam1 to be phosphorylated. Post-translationally, phosphorylated on tyrosine residues in the intracellular domain. Tyrosine protein kinase Src42A and possibly Src64B are involved in this phosphorylation. Glycosylation on Asn-53 and Asn-325 is involved in stabilizing dimerization. In terms of processing, proteolytically processed, probably to generate a secreted form. As to expression, secreted into the hemolymph (at protein level). Expressed in brain and eye-antennal imaginal disks, including R3/R4 and R7 photoreceptor cells. Individual R3/R4 cells express between 14 and 50 randomly generated mRNAs encoding distinct isoforms.

It is found in the cell membrane. Its subcellular location is the cell projection. The protein resides in the neuron projection. It localises to the axon. The protein localises to the perikaryon. It is found in the dendrite. Its subcellular location is the secreted. Cell surface receptor involved in guidance and targeting of growing nerve axons. Required during Bolwig's organ differentiation for accurate and efficient targeting of photoreceptor neuron axons to their synaptic targets in the brain via the P2 intermediate target neuron. Involved in isoneural self-avoidance during dendrite arborization but not in heteroneural recognition and repulsion during tiling by related neurons of the same class. Involved in regulating axon bifurcation and divergent extension in the developing mushroom body. Essential for axon arborisation in ellipsoid body. Exhibits an extraordinary level of molecular diversity resulting from alternative splicing. Isoforms differing in their ectodomain makeup show a high degree of functional redundancy while isoforms with different transmembrane domains are involved in different neuronal morphogenetic processes and are differentially targeted to dendrites or axons. The vast majority of isoforms exhibit strong isoform-specific homophilic binding. Individual cells express a distinct randomly generated repertoire of isoforms. Cell surfaces bearing identical repertoires of Dscam1 isoforms, such as those from the same cell, trigger recognition and avoidance. A subset of isoforms is expressed in fat body cells and hemocytes, cells that are part of the insect immune response, and these isoforms are secreted into the hemolymph. The secreted form comprising the ectodomain can bind to bacteria, such as Escherichia coli, and may act as an opsonin enhancing their phagocytosis by hemocytes. In Drosophila melanogaster (Fruit fly), this protein is Cell adhesion molecule Dscam1.